The sequence spans 220 residues: MKNTPEVKASPQTGYRIPGYLLVVYALLLFTLGWFGHQRWADISPIPLSTSAAAIAAPPTKVGMVPASTAVTADENHPGSLHAAAENSATQTAASGSQTSASSQEATPDTKPAKLVTGWQTAKPGELPYIAFSAHVYTSAPDKRSVTLNGERYREGDSPYQGLVIEQIEQDMVIFSFNGEPFILDSLQDWPGGKPGDDAAQGNEQEPTSKPEQTVRTTKK.

Residues 17–37 (IPGYLLVVYALLLFTLGWFGH) form a helical membrane-spanning segment. Over residues 85-107 (AENSATQTAASGSQTSASSQEAT) the composition is skewed to low complexity. 2 disordered regions span residues 85–114 (AENS…KPAK) and 188–220 (QDWP…TTKK). Residues 202–220 (GNEQEPTSKPEQTVRTTKK) are compositionally biased toward polar residues.

It belongs to the ExeB/OutB/PulB family.

It localises to the cell inner membrane. Its function is as follows. Out proteins are required for the translocation of pectate lyases and cellulases across the outer membrane. The protein is General secretion pathway protein B (outB) of Dickeya dadantii (strain 3937) (Erwinia chrysanthemi (strain 3937)).